The primary structure comprises 102 residues: MFAIIKNGSKQFRVFEGQEIFVEKISLMEKSNYEFKEILAIGGKNNILGQPFVSGAKVQAQIIKHGRAKKIIVFKYKSKKKYRCKQGHRQNYTKLLITKIIA.

This sequence belongs to the bacterial ribosomal protein bL21 family. As to quaternary structure, part of the 50S ribosomal subunit. Contacts protein L20.

Functionally, this protein binds to 23S rRNA in the presence of protein L20. The sequence is that of Large ribosomal subunit protein bL21 from Phytoplasma mali (strain AT).